The primary structure comprises 260 residues: MTGLCDSHLHTPLCGHATGTPREYAQAALDAGLSGLCFTDHMPMPRWYDAPWRMKLEQLPEYIAEIQAVQQEFAGRLDVRLGLEADFHPGTEKFVEKVLGMFDWDYVIGSVHYLGAWGFDNPEFVAEYEERDLGGLYRDYYALVEGAARSGLFDAIGHLDLPKKFGHLDPDPVYALHALDVVAGQGLALDFNTAGWRKPVAEAYPAPDLVRAAAERGIPFVLGSDAHQPGEVGFRFADAVKEIRDVGGRTVTFRHRKMQP.

The protein belongs to the PHP hydrolase family. HisK subfamily.

The catalysed reaction is L-histidinol phosphate + H2O = L-histidinol + phosphate. Its pathway is amino-acid biosynthesis; L-histidine biosynthesis; L-histidine from 5-phospho-alpha-D-ribose 1-diphosphate: step 8/9. The chain is Probable histidinol-phosphatase (hisK) from Deinococcus radiodurans (strain ATCC 13939 / DSM 20539 / JCM 16871 / CCUG 27074 / LMG 4051 / NBRC 15346 / NCIMB 9279 / VKM B-1422 / R1).